Here is a 288-residue protein sequence, read N- to C-terminus: Acetyl-coenzyme A carboxylase carboxyl transferase subunit beta, chloroplastic (288 aa).

Residues 30-288 form the CoA carboxyltransferase N-terminal domain; it reads LWIKCFDCGL…QILSLHNHSK (259 aa). Zn(2+) contacts are provided by Cys34, Cys37, Cys53, and Cys56. The C4-type zinc finger occupies 34–56; the sequence is CFDCGLLMYSKVLKRNLKVCPQC.

The protein belongs to the AccD/PCCB family. In terms of assembly, acetyl-CoA carboxylase is a heterohexamer composed of biotin carboxyl carrier protein, biotin carboxylase and 2 subunits each of ACCase subunit alpha and ACCase plastid-coded subunit beta (accD). Zn(2+) serves as cofactor.

The protein resides in the plastid. Its subcellular location is the chloroplast stroma. It carries out the reaction N(6)-carboxybiotinyl-L-lysyl-[protein] + acetyl-CoA = N(6)-biotinyl-L-lysyl-[protein] + malonyl-CoA. The protein operates within lipid metabolism; malonyl-CoA biosynthesis; malonyl-CoA from acetyl-CoA: step 1/1. Its function is as follows. Component of the acetyl coenzyme A carboxylase (ACC) complex. Biotin carboxylase (BC) catalyzes the carboxylation of biotin on its carrier protein (BCCP) and then the CO(2) group is transferred by the transcarboxylase to acetyl-CoA to form malonyl-CoA. The chain is Acetyl-coenzyme A carboxylase carboxyl transferase subunit beta, chloroplastic from Pyropia yezoensis (Susabi-nori).